Consider the following 431-residue polypeptide: 4-hydroxy-3-methylbut-2-en-1-yl diphosphate synthase (flavodoxin) (431 aa).

The [4Fe-4S] cluster site is built by Cys-310, Cys-313, Cys-356, and Glu-363.

It belongs to the IspG family. It depends on [4Fe-4S] cluster as a cofactor.

It catalyses the reaction (2E)-4-hydroxy-3-methylbut-2-enyl diphosphate + oxidized [flavodoxin] + H2O + 2 H(+) = 2-C-methyl-D-erythritol 2,4-cyclic diphosphate + reduced [flavodoxin]. It participates in isoprenoid biosynthesis; isopentenyl diphosphate biosynthesis via DXP pathway; isopentenyl diphosphate from 1-deoxy-D-xylulose 5-phosphate: step 5/6. Functionally, converts 2C-methyl-D-erythritol 2,4-cyclodiphosphate (ME-2,4cPP) into 1-hydroxy-2-methyl-2-(E)-butenyl 4-diphosphate. The chain is 4-hydroxy-3-methylbut-2-en-1-yl diphosphate synthase (flavodoxin) from Rhodopseudomonas palustris (strain HaA2).